The chain runs to 434 residues: 3-phosphoshikimate 1-carboxyvinyltransferase (434 aa).

Positions 15, 16, and 20 each coordinate 3-phosphoshikimate. Lys-15 lines the phosphoenolpyruvate pocket. Residues Gly-96 and Arg-124 each coordinate phosphoenolpyruvate. Residues Ser-169, Gln-171, Ser-195, Asp-319, and Lys-346 each contribute to the 3-phosphoshikimate site. Gln-171 lines the phosphoenolpyruvate pocket. The Proton acceptor role is filled by Asp-319. Phosphoenolpyruvate-binding residues include Arg-350 and Arg-394.

The protein belongs to the EPSP synthase family. In terms of assembly, monomer.

The protein resides in the cytoplasm. The catalysed reaction is 3-phosphoshikimate + phosphoenolpyruvate = 5-O-(1-carboxyvinyl)-3-phosphoshikimate + phosphate. The protein operates within metabolic intermediate biosynthesis; chorismate biosynthesis; chorismate from D-erythrose 4-phosphate and phosphoenolpyruvate: step 6/7. Catalyzes the transfer of the enolpyruvyl moiety of phosphoenolpyruvate (PEP) to the 5-hydroxyl of shikimate-3-phosphate (S3P) to produce enolpyruvyl shikimate-3-phosphate and inorganic phosphate. In Chlorobium phaeobacteroides (strain DSM 266 / SMG 266 / 2430), this protein is 3-phosphoshikimate 1-carboxyvinyltransferase.